The sequence spans 440 residues: Chromosomal replication initiator protein DnaA (440 aa).

A domain I, interacts with DnaA modulators region spans residues 1-93 (MNVQLNEIWN…QTPVKPVAQE (93 aa)). The interval 94–101 (YTEDSNMS) is domain II. Positions 102–318 (FLNPKYTFDT…GALNRVIAYS (217 aa)) are domain III, AAA+ region. ATP contacts are provided by Gly146, Gly148, Lys149, and Thr150. Residues 319–440 (TLTENIINVD…EEIKKNITGG (122 aa)) are domain IV, binds dsDNA.

This sequence belongs to the DnaA family. Oligomerizes as a right-handed, spiral filament on DNA at oriC.

It is found in the cytoplasm. Functionally, plays an essential role in the initiation and regulation of chromosomal replication. ATP-DnaA binds to the origin of replication (oriC) to initiate formation of the DNA replication initiation complex once per cell cycle. Binds the DnaA box (a 9 base pair repeat at the origin) and separates the double-stranded (ds)DNA. Forms a right-handed helical filament on oriC DNA; dsDNA binds to the exterior of the filament while single-stranded (ss)DNA is stabiized in the filament's interior. The ATP-DnaA-oriC complex binds and stabilizes one strand of the AT-rich DNA unwinding element (DUE), permitting loading of DNA polymerase. After initiation quickly degrades to an ADP-DnaA complex that is not apt for DNA replication. Binds acidic phospholipids. This is Chromosomal replication initiator protein DnaA from Ruminiclostridium cellulolyticum (strain ATCC 35319 / DSM 5812 / JCM 6584 / H10) (Clostridium cellulolyticum).